A 513-amino-acid polypeptide reads, in one-letter code: MQLNSTEISDLIKQRIQQFDVVSEARNEGTIVAVSDGIIRINGLADVMQGEMIELPGGCFAIALNLERDSVGAVVMGPYANLAEGDKVRTTGRILEVPVGRGLLGRVVNTLGEPIDGKGPIDNDGFSPVEVIAPGVIERKSVSQPIQTGYKAVDAMIPIGRGQRELIIGDRQTGKTAMAIDAIINQKESGIKCVYVAIGQKASTIANVVRKLEEHGALANTIVVVASASEAAALQYLAPYSGCSMGEYFRDRGEDSLIVYDDLSKQAVAYRQISLLLKRPPGREAYPGDVFYLHSRLLERASRVNVNYVEKFTKGAVTGQTGSLTALPIIETQAGDVSAFVPTNVISITDGQIFLETDLFNSGLRPAVNPGISVSRVGGAAQTKIIKKLSGGIRTALAQYRELAAFSQFASDLDDATRAQLEHGERVTELMKQKQYAPMSVAAQSVSIFAAEKGYLKGVALNEIGRFEASLLSYMNSQHTDLMNTINATGDYNADIEGELKAGMDKFIETQTW.

169 to 176 (GDRQTGKT) is a binding site for ATP.

It belongs to the ATPase alpha/beta chains family. As to quaternary structure, F-type ATPases have 2 components, CF(1) - the catalytic core - and CF(0) - the membrane proton channel. CF(1) has five subunits: alpha(3), beta(3), gamma(1), delta(1), epsilon(1). CF(0) has three main subunits: a(1), b(2) and c(9-12). The alpha and beta chains form an alternating ring which encloses part of the gamma chain. CF(1) is attached to CF(0) by a central stalk formed by the gamma and epsilon chains, while a peripheral stalk is formed by the delta and b chains.

It localises to the cell inner membrane. It carries out the reaction ATP + H2O + 4 H(+)(in) = ADP + phosphate + 5 H(+)(out). Produces ATP from ADP in the presence of a proton gradient across the membrane. The alpha chain is a regulatory subunit. This is ATP synthase subunit alpha 2 from Shewanella frigidimarina (strain NCIMB 400).